A 368-amino-acid polypeptide reads, in one-letter code: Flagellar P-ring protein 1 (368 aa).

A signal peptide spans 1-24 (MIFKQIRRLIAAALLAALSLPAAA).

It belongs to the FlgI family. The basal body constitutes a major portion of the flagellar organelle and consists of four rings (L,P,S, and M) mounted on a central rod.

Its subcellular location is the periplasm. The protein localises to the bacterial flagellum basal body. In terms of biological role, assembles around the rod to form the L-ring and probably protects the motor/basal body from shearing forces during rotation. The protein is Flagellar P-ring protein 1 of Chromobacterium violaceum (strain ATCC 12472 / DSM 30191 / JCM 1249 / CCUG 213 / NBRC 12614 / NCIMB 9131 / NCTC 9757 / MK).